The sequence spans 367 residues: Probable dual-specificity RNA methyltransferase RlmN (367 aa).

Glu-92 (proton acceptor) is an active-site residue. The region spanning Gln-98–Asn-326 is the Radical SAM core domain. A disulfide bridge connects residues Cys-105 and Cys-341. [4Fe-4S] cluster is bound by residues Cys-112, Cys-116, and Cys-119. S-adenosyl-L-methionine-binding positions include Gly-164–Glu-165, Ser-196, Ser-219–His-221, and Asn-297. Cys-341 functions as the S-methylcysteine intermediate in the catalytic mechanism.

The protein belongs to the radical SAM superfamily. RlmN family. [4Fe-4S] cluster is required as a cofactor.

It is found in the cytoplasm. The enzyme catalyses adenosine(2503) in 23S rRNA + 2 reduced [2Fe-2S]-[ferredoxin] + 2 S-adenosyl-L-methionine = 2-methyladenosine(2503) in 23S rRNA + 5'-deoxyadenosine + L-methionine + 2 oxidized [2Fe-2S]-[ferredoxin] + S-adenosyl-L-homocysteine. The catalysed reaction is adenosine(37) in tRNA + 2 reduced [2Fe-2S]-[ferredoxin] + 2 S-adenosyl-L-methionine = 2-methyladenosine(37) in tRNA + 5'-deoxyadenosine + L-methionine + 2 oxidized [2Fe-2S]-[ferredoxin] + S-adenosyl-L-homocysteine. Functionally, specifically methylates position 2 of adenine 2503 in 23S rRNA and position 2 of adenine 37 in tRNAs. In Listeria innocua serovar 6a (strain ATCC BAA-680 / CLIP 11262), this protein is Probable dual-specificity RNA methyltransferase RlmN.